Reading from the N-terminus, the 256-residue chain is Enolase-phosphatase E1 (256 aa).

Mg(2+) contacts are provided by Asp-14 and Glu-16. Substrate is bound by residues 142-143 (SS) and Lys-176. Asp-201 contributes to the Mg(2+) binding site.

This sequence belongs to the HAD-like hydrolase superfamily. MasA/MtnC family. In terms of assembly, monomer. The cofactor is Mg(2+).

Its subcellular location is the cytoplasm. The protein localises to the nucleus. The catalysed reaction is 5-methylsulfanyl-2,3-dioxopentyl phosphate + H2O = 1,2-dihydroxy-5-(methylsulfanyl)pent-1-en-3-one + phosphate. Its pathway is amino-acid biosynthesis; L-methionine biosynthesis via salvage pathway; L-methionine from S-methyl-5-thio-alpha-D-ribose 1-phosphate: step 3/6. It participates in amino-acid biosynthesis; L-methionine biosynthesis via salvage pathway; L-methionine from S-methyl-5-thio-alpha-D-ribose 1-phosphate: step 4/6. Its function is as follows. Bifunctional enzyme that catalyzes the enolization of 2,3-diketo-5-methylthiopentyl-1-phosphate (DK-MTP-1-P) into the intermediate 2-hydroxy-3-keto-5-methylthiopentenyl-1-phosphate (HK-MTPenyl-1-P), which is then dephosphorylated to form the acireductone 1,2-dihydroxy-3-keto-5-methylthiopentene (DHK-MTPene). This chain is Enolase-phosphatase E1, found in Drosophila simulans (Fruit fly).